The following is a 311-amino-acid chain: tRNA pseudouridine synthase B (311 aa).

The Nucleophile role is filled by D52.

This sequence belongs to the pseudouridine synthase TruB family. Type 1 subfamily.

The catalysed reaction is uridine(55) in tRNA = pseudouridine(55) in tRNA. In terms of biological role, responsible for synthesis of pseudouridine from uracil-55 in the psi GC loop of transfer RNAs. The chain is tRNA pseudouridine synthase B from Burkholderia mallei (strain ATCC 23344).